Reading from the N-terminus, the 87-residue chain is Small ribosomal subunit protein uS15c (87 aa).

The protein belongs to the universal ribosomal protein uS15 family. Part of the 30S ribosomal subunit.

The protein localises to the plastid. It localises to the chloroplast. This chain is Small ribosomal subunit protein uS15c (rps15), found in Oenothera glazioviana (Large-flowered evening primrose).